Here is a 124-residue protein sequence, read N- to C-terminus: Small ribosomal subunit protein uS12 (124 aa).

Asp89 carries the post-translational modification 3-methylthioaspartic acid.

The protein belongs to the universal ribosomal protein uS12 family. In terms of assembly, part of the 30S ribosomal subunit. Contacts proteins S8 and S17. May interact with IF1 in the 30S initiation complex.

In terms of biological role, with S4 and S5 plays an important role in translational accuracy. Interacts with and stabilizes bases of the 16S rRNA that are involved in tRNA selection in the A site and with the mRNA backbone. Located at the interface of the 30S and 50S subunits, it traverses the body of the 30S subunit contacting proteins on the other side and probably holding the rRNA structure together. The combined cluster of proteins S8, S12 and S17 appears to hold together the shoulder and platform of the 30S subunit. The protein is Small ribosomal subunit protein uS12 of Klebsiella pneumoniae (strain 342).